The chain runs to 667 residues: Homeobox protein 3 (667 aa).

4 disordered regions span residues 44-108 (FFQP…NSSI), 179-232 (NNNN…TVYN), 249-268 (NNNNLNLTNNNNNKNSVNNN), and 331-418 (STNK…YQKQ). Positions 52–63 (LPPPTNQQPQPQ) are enriched in pro residues. A compositionally biased stretch (polar residues) spans 75 to 96 (CNSSFENSPQQPTSPLLISSQT). Low complexity predominate over residues 97 to 108 (SYPSDLSSNSSI). Basic residues predominate over residues 334-343 (KRMKISHHSH). A compositionally biased stretch (low complexity) spans 344–379 (SLSNNNENSLSQPYFNNNNNNNNENENVYNIVNEQN). Residues 380–390 (PTFNPNQSNTH) show a composition bias toward polar residues. A coiled-coil region spans residues 386–454 (QSNTHQQQEE…ENENVICSEF (69 aa)). A DNA-binding region (homeobox) is located at residues 602-664 (EFKSRRILSE…NKRMRDKSNK (63 aa)).

It localises to the nucleus. Functionally, putative transcription factor. The chain is Homeobox protein 3 (hbx3) from Dictyostelium discoideum (Social amoeba).